A 478-amino-acid chain; its full sequence is Alpha,alpha-trehalose-phosphate synthase [UDP-forming] (478 aa).

D-glucose 6-phosphate-binding residues include Y89 and D143. The UDP site is built by R280 and K285. UDP-alpha-D-glucose is bound by residues R280 and K285. Residue R318 coordinates D-glucose 6-phosphate. Residues I357 and 383 to 387 (LVSYE) contribute to the UDP site. Residues I357 and 379 to 387 (DGMNLVSYE) contribute to the UDP-alpha-D-glucose site.

Belongs to the glycosyltransferase 20 family.

It carries out the reaction D-glucose 6-phosphate + UDP-alpha-D-glucose = alpha,alpha-trehalose 6-phosphate + UDP + H(+). Its pathway is carbohydrate biosynthesis. Inhibited by validoxylamine A, a non-reactive trehalose analog. Synthase catalytic subunit of the trehalose synthase complex that catalyzes the production of trehalose from glucose-6-phosphate and UDP-alpha-D-glucose in a two step process. This is Alpha,alpha-trehalose-phosphate synthase [UDP-forming] from Candida albicans (strain SC5314 / ATCC MYA-2876) (Yeast).